Reading from the N-terminus, the 197-residue chain is Holliday junction branch migration complex subunit RuvA (197 aa).

The interval Met-1–Leu-64 is domain I. Residues Arg-65–Thr-143 are domain II. Positions Gly-144–Leu-153 are flexible linker. The segment at Leu-153 to Arg-197 is domain III.

This sequence belongs to the RuvA family. Homotetramer. Forms an RuvA(8)-RuvB(12)-Holliday junction (HJ) complex. HJ DNA is sandwiched between 2 RuvA tetramers; dsDNA enters through RuvA and exits via RuvB. An RuvB hexamer assembles on each DNA strand where it exits the tetramer. Each RuvB hexamer is contacted by two RuvA subunits (via domain III) on 2 adjacent RuvB subunits; this complex drives branch migration. In the full resolvosome a probable DNA-RuvA(4)-RuvB(12)-RuvC(2) complex forms which resolves the HJ.

It localises to the cytoplasm. Its function is as follows. The RuvA-RuvB-RuvC complex processes Holliday junction (HJ) DNA during genetic recombination and DNA repair, while the RuvA-RuvB complex plays an important role in the rescue of blocked DNA replication forks via replication fork reversal (RFR). RuvA specifically binds to HJ cruciform DNA, conferring on it an open structure. The RuvB hexamer acts as an ATP-dependent pump, pulling dsDNA into and through the RuvAB complex. HJ branch migration allows RuvC to scan DNA until it finds its consensus sequence, where it cleaves and resolves the cruciform DNA. This chain is Holliday junction branch migration complex subunit RuvA, found in Stenotrophomonas maltophilia (strain R551-3).